Reading from the N-terminus, the 134-residue chain is Replication enhancer protein (134 aa).

It belongs to the geminiviridae replication enhancer protein family. As to quaternary structure, homooligomer. Interacts with the replication-associated protein (REP). Interacts with host proliferating cell nuclear antigen (PCNA). Interacts with host retinoblastoma-related protein 1 (RBR1), and may thereby deregulate the host cell cycle. Oligomerization and interaction with PCNA are necessary for optimal replication enhancement.

Its function is as follows. Increases viral DNA accumulation. Enhances infectivity and symptom expression. The sequence is that of Replication enhancer protein from Tomato pseudo-curly top virus (TPCTV).